Here is a 562-residue protein sequence, read N- to C-terminus: Teichoic acid ribitol-phosphate polymerase TarL (562 aa).

It belongs to the CDP-glycerol glycerophosphotransferase family.

The protein resides in the cell membrane. The enzyme catalyses 4-O-[di(2R)-glycerylphospho]-N-acetyl-beta-D-mannosaminyl-(1-&gt;4)-N-acetyl-alpha-D-glucosaminyl di-trans,octa-cis-undecaprenyl diphosphate + n CDP-L-ribitol = 4-O-[(D-ribitylphospho)(n)-di{(2R)-glycerylphospho}]-N-acetyl-beta-D-mannosaminyl-(1-&gt;4)-N-acetyl-alpha-D-glucosaminyl di-trans,octa-cis-undecaprenyl diphosphate + n CMP + n H(+). It participates in cell wall biogenesis; poly(ribitol phosphate) teichoic acid biosynthesis. Its function is as follows. Responsible for the polymerization of the main chain of the major teichoic acid by sequential transfer of ribitol phosphate units from CDP-ribitol to the second glycerol phosphate attached to the disaccharide linkage unit. Synthesizes polymers of more than 40 ribitol phosphate units in length. The polypeptide is Teichoic acid ribitol-phosphate polymerase TarL (tarL) (Staphylococcus aureus (strain NCTC 8325 / PS 47)).